Here is a 72-residue protein sequence, read N- to C-terminus: Large ribosomal subunit protein bL28 (72 aa).

The protein belongs to the bacterial ribosomal protein bL28 family.

This chain is Large ribosomal subunit protein bL28, found in Chlorobium chlorochromatii (strain CaD3).